A 432-amino-acid polypeptide reads, in one-letter code: Trigger factor (432 aa).

Positions 161–246 (GKRVSIDFVG…VNKVEARQLP (86 aa)) constitute a PPIase FKBP-type domain.

It belongs to the FKBP-type PPIase family. Tig subfamily.

The protein resides in the cytoplasm. It carries out the reaction [protein]-peptidylproline (omega=180) = [protein]-peptidylproline (omega=0). In terms of biological role, involved in protein export. Acts as a chaperone by maintaining the newly synthesized protein in an open conformation. Functions as a peptidyl-prolyl cis-trans isomerase. This chain is Trigger factor, found in Vibrio vulnificus (strain YJ016).